The following is a 558-amino-acid chain: Urease subunit alpha 2 (558 aa).

The region spanning 129-558 (GAVDTHVHLL…SVSLNRLYFL (430 aa)) is the Urease domain. Positions 134, 136, and 214 each coordinate Ni(2+). At K214 the chain carries N6-carboxylysine. H216 is a binding site for substrate. 2 residues coordinate Ni(2+): H243 and H269. The Proton donor role is filled by H317. D357 provides a ligand contact to Ni(2+).

Belongs to the metallo-dependent hydrolases superfamily. Urease alpha subunit family. May form a heterohexamer of 3 UreC (alpha) and 3 UreAB (gamma/beta) subunits. May also form a heterotrimer of UreA (gamma), UreB (beta) and UreC (alpha) subunits. Three heterotrimers associate to form the active enzyme. It depends on Ni cation as a cofactor. Carboxylation allows a single lysine to coordinate two nickel ions.

The protein resides in the cytoplasm. It carries out the reaction urea + 2 H2O + H(+) = hydrogencarbonate + 2 NH4(+). The protein operates within nitrogen metabolism; urea degradation; CO(2) and NH(3) from urea (urease route): step 1/1. The polypeptide is Urease subunit alpha 2 (Streptomyces coelicolor (strain ATCC BAA-471 / A3(2) / M145)).